The primary structure comprises 1400 residues: MKDLINFLKRQTQSEEFDAIRISLASPDMIRSWSYGEVKKPETINYRTFKPERDGLFCAKIFGPVSDYECLCGKYKRLKHRGVICEKCGVEVTLSKVRRERMGHIELASPVAHIWFLKSLPSRIALLLDMQLREIERVLYFESYVVIDPGMTPLTRGQLLGEEEYQKLVEQYDDEFTAKMGAEAIRELLRTMDLHAEVVQLREEINGTNSETKIKKYTKRLKAIESMLASNNRPEWMILTVLPVLPPDLRPLVPLDGGRFATSDLNDLYRRVINRNNRLKRLLDLNAPDIIVRNEKRMLQESVDALLDNGRRGRAITGSNKRPLKSLADMIKGKQGRFRQNLLGKRVDYSGRSVIVVGPTLRLHQCGLPKKMALELFKPFIFSKLQFRGLATTIKAAKKMVEREAPEVWDILDEVIREHPVMLNRAPTLHRLGIQAFEPILIEGKAIQLHPLVCTAFNADFDGDQMAVHVPLSLEAQLEARSLMMATNNILSPANGEPIINPTQDVVMGLYYMSRERLFAKGEGMTFASVDEAEQAFLNGAVDLHAKVVVRVREVVVGEGGERTESIKRVQTTVGRALIWNIVPEGIPFEMVNVDMTKKAISRLINHAYRTLGIKASVIFADQLMYLGFSHATRAGVSFGVEDMEIPVRKDEIIQAAEREVKEIQNQFASGLVTDGERYNKVVDIWSHANDQVAKVMMEGLGVDEVTVGNGETIKQKSFNSIFMMADSGARGSAAQIRQLAGMRGLMAKPDGSIIETPITANFREGLTVLQYFISTHGARKGLADTALKTANSGYLTRRLVDVAQDLVITEDDCGTTDGLQMAPLIEGGDVVEPLAERVLGRVLAEHAVDPASGDVLLEAGSMLDERAVQLLEQHGVDNVRVRSVITCKTRYGVCASCYGRDLGRGHKVNIGEAIGVIAAQSIGEPGTQLTMRTFHIGGAASRSAAISNVEVKSSGQIRLTNLKTVVNRDNALVAVSRSGEISVIDEHGRERERYKIPYGAVLSVREGGAVKAGQIVVNWDPHTHPVISEVRGRAKLIDFVEGVTVREQSDEMTGLSSMVVIDPKQRGGAGKELRPLVKLVDEEGNDIFIPSTEITAQYFLPAGAIIGIRDGDLVEVGDVLARIPQESSKTRDITGGLPRVADLFEARKTKDPAILAEATGTVSFGKETKGKRRLIITDASGEQHEVMVPKWRNITVFEGEHVEQGETIAEGELTPHDILRLRGTAELASYLVKEIQDVYRLQGVKINDKHIEVIIRQMLRKVEITDPGDSSFLRGEQVDRSRLLEENDRLEEEGKVPACYEPVLLGITKASLSTESFISAASFQETTRVLTEAAIRGSTDRLQGLKENVIVGRLIPAGTGLAYHTERRERAKLGEVTEPETPIIDTAEVEEALKQAFSL.

Residues Cys70, Cys72, Cys85, and Cys88 each contribute to the Zn(2+) site. The Mg(2+) site is built by Asp460, Asp462, and Asp464. Cys814, Cys888, Cys895, and Cys898 together coordinate Zn(2+).

This sequence belongs to the RNA polymerase beta' chain family. In terms of assembly, the RNAP catalytic core consists of 2 alpha, 1 beta, 1 beta' and 1 omega subunit. When a sigma factor is associated with the core the holoenzyme is formed, which can initiate transcription. Mg(2+) serves as cofactor. It depends on Zn(2+) as a cofactor.

It catalyses the reaction RNA(n) + a ribonucleoside 5'-triphosphate = RNA(n+1) + diphosphate. Its function is as follows. DNA-dependent RNA polymerase catalyzes the transcription of DNA into RNA using the four ribonucleoside triphosphates as substrates. The polypeptide is DNA-directed RNA polymerase subunit beta' (Methylococcus capsulatus (strain ATCC 33009 / NCIMB 11132 / Bath)).